We begin with the raw amino-acid sequence, 254 residues long: Cytochrome c oxidase subunit 2 (254 aa).

The Mitochondrial intermembrane portion of the chain corresponds to 1 to 37 (MNNILNFYPAVITTDVAENWQIGFQDPATPIMEGIIN). A helical transmembrane segment spans residues 38–58 (LHYDLMFFICVISVFVSWMLG). The Mitochondrial matrix segment spans residues 59–83 (RTLWHFEQNQNKIPSSLTHGTLIEM). The helical transmembrane segment at 84–104 (IWTVTPAFILLIIAVPSFSLL) threads the bilayer. Topologically, residues 105-254 (YAMDEIISPA…VSWISNKLNE (150 aa)) are mitochondrial intermembrane. His186, Cys221, Glu223, Cys225, His229, and Met232 together coordinate Cu cation. Mg(2+) is bound at residue Glu223.

This sequence belongs to the cytochrome c oxidase subunit 2 family. In terms of assembly, component of the cytochrome c oxidase (complex IV, CIV), a multisubunit enzyme composed of a catalytic core of 3 subunits and several supernumerary subunits. The complex exists as a monomer or a dimer and forms supercomplexes (SCs) in the inner mitochondrial membrane with ubiquinol-cytochrome c oxidoreductase (cytochrome b-c1 complex, complex III, CIII). Requires Cu cation as cofactor.

The protein resides in the mitochondrion inner membrane. The enzyme catalyses 4 Fe(II)-[cytochrome c] + O2 + 8 H(+)(in) = 4 Fe(III)-[cytochrome c] + 2 H2O + 4 H(+)(out). Component of the cytochrome c oxidase, the last enzyme in the mitochondrial electron transport chain which drives oxidative phosphorylation. The respiratory chain contains 3 multisubunit complexes succinate dehydrogenase (complex II, CII), ubiquinol-cytochrome c oxidoreductase (cytochrome b-c1 complex, complex III, CIII) and cytochrome c oxidase (complex IV, CIV), that cooperate to transfer electrons derived from NADH and succinate to molecular oxygen, creating an electrochemical gradient over the inner membrane that drives transmembrane transport and the ATP synthase. Cytochrome c oxidase is the component of the respiratory chain that catalyzes the reduction of oxygen to water. Electrons originating from reduced cytochrome c in the intermembrane space (IMS) are transferred via the dinuclear copper A center (CU(A)) of subunit 2 and heme A of subunit 1 to the active site in subunit 1, a binuclear center (BNC) formed by heme A3 and copper B (CU(B)). The BNC reduces molecular oxygen to 2 water molecules using 4 electrons from cytochrome c in the IMS and 4 protons from the mitochondrial matrix. In Chondrus crispus (Carrageen Irish moss), this protein is Cytochrome c oxidase subunit 2 (COX2).